The chain runs to 347 residues: UDP-3-O-acylglucosamine N-acyltransferase (347 aa).

H242 serves as the catalytic Proton acceptor.

The protein belongs to the transferase hexapeptide repeat family. LpxD subfamily. In terms of assembly, homotrimer.

It carries out the reaction a UDP-3-O-[(3R)-3-hydroxyacyl]-alpha-D-glucosamine + a (3R)-hydroxyacyl-[ACP] = a UDP-2-N,3-O-bis[(3R)-3-hydroxyacyl]-alpha-D-glucosamine + holo-[ACP] + H(+). Its pathway is bacterial outer membrane biogenesis; LPS lipid A biosynthesis. Its function is as follows. Catalyzes the N-acylation of UDP-3-O-acylglucosamine using 3-hydroxyacyl-ACP as the acyl donor. Is involved in the biosynthesis of lipid A, a phosphorylated glycolipid that anchors the lipopolysaccharide to the outer membrane of the cell. This chain is UDP-3-O-acylglucosamine N-acyltransferase, found in Dechloromonas aromatica (strain RCB).